We begin with the raw amino-acid sequence, 611 residues long: Probable methyltransferase PMT19 (611 aa).

Topologically, residues 1 to 15 are cytoplasmic; sequence MNPSQQHLPKLCPKR. The chain crosses the membrane as a helical; Signal-anchor for type II membrane protein span at residues 16-36; sequence LFLFFTPFLLFSLYYILTTIK. Topologically, residues 37 to 611 are lumenal; that stretch reads TITISSQDRH…TILIVDNSIK (575 aa). N-linked (GlcNAc...) asparagine glycosylation is found at Asn-68, Asn-97, Asn-289, Asn-408, Asn-411, and Asn-587.

This sequence belongs to the methyltransferase superfamily.

It is found in the endoplasmic reticulum membrane. The chain is Probable methyltransferase PMT19 from Arabidopsis thaliana (Mouse-ear cress).